Reading from the N-terminus, the 227-residue chain is Cytochrome c oxidase subunit 2 (227 aa).

Residues 1–14 are Mitochondrial intermembrane-facing; sequence MAYPMQLGLQDATS. The chain crosses the membrane as a helical span at residues 15-45; that stretch reads PIMEELTDFHDHTLMIVFLISTLVLYIISLM. At 46–59 the chain is on the mitochondrial matrix side; it reads LTTKLTHTNTMDAQ. Residues 60-87 form a helical membrane-spanning segment; sequence EVETVWTILPAIILIMIALPSLRILYMM. The Mitochondrial intermembrane segment spans residues 88-227; that stretch reads DEINDPYLTV…QFESWTSSMT (140 aa). Cu cation-binding residues include histidine 161, cysteine 196, glutamate 198, cysteine 200, histidine 204, and methionine 207. Glutamate 198 contacts Mg(2+).

It belongs to the cytochrome c oxidase subunit 2 family. As to quaternary structure, component of the cytochrome c oxidase (complex IV, CIV), a multisubunit enzyme composed of 14 subunits. The complex is composed of a catalytic core of 3 subunits MT-CO1, MT-CO2 and MT-CO3, encoded in the mitochondrial DNA, and 11 supernumerary subunits COX4I, COX5A, COX5B, COX6A, COX6B, COX6C, COX7A, COX7B, COX7C, COX8 and NDUFA4, which are encoded in the nuclear genome. The complex exists as a monomer or a dimer and forms supercomplexes (SCs) in the inner mitochondrial membrane with NADH-ubiquinone oxidoreductase (complex I, CI) and ubiquinol-cytochrome c oxidoreductase (cytochrome b-c1 complex, complex III, CIII), resulting in different assemblies (supercomplex SCI(1)III(2)IV(1) and megacomplex MCI(2)III(2)IV(2)). Found in a complex with TMEM177, COA6, COX18, COX20, SCO1 and SCO2. Interacts with TMEM177 in a COX20-dependent manner. Interacts with COX20. Interacts with COX16. Cu cation is required as a cofactor.

Its subcellular location is the mitochondrion inner membrane. It carries out the reaction 4 Fe(II)-[cytochrome c] + O2 + 8 H(+)(in) = 4 Fe(III)-[cytochrome c] + 2 H2O + 4 H(+)(out). In terms of biological role, component of the cytochrome c oxidase, the last enzyme in the mitochondrial electron transport chain which drives oxidative phosphorylation. The respiratory chain contains 3 multisubunit complexes succinate dehydrogenase (complex II, CII), ubiquinol-cytochrome c oxidoreductase (cytochrome b-c1 complex, complex III, CIII) and cytochrome c oxidase (complex IV, CIV), that cooperate to transfer electrons derived from NADH and succinate to molecular oxygen, creating an electrochemical gradient over the inner membrane that drives transmembrane transport and the ATP synthase. Cytochrome c oxidase is the component of the respiratory chain that catalyzes the reduction of oxygen to water. Electrons originating from reduced cytochrome c in the intermembrane space (IMS) are transferred via the dinuclear copper A center (CU(A)) of subunit 2 and heme A of subunit 1 to the active site in subunit 1, a binuclear center (BNC) formed by heme A3 and copper B (CU(B)). The BNC reduces molecular oxygen to 2 water molecules using 4 electrons from cytochrome c in the IMS and 4 protons from the mitochondrial matrix. In Cratogeomys castanops (Yellow-faced pocket gopher), this protein is Cytochrome c oxidase subunit 2 (MT-CO2).